Reading from the N-terminus, the 75-residue chain is RNA-binding protein KhpA (75 aa).

Residues 29–75 enclose the KH domain; the sequence is SIIIELKVAPEDMGKVIGKQGRIAQAIRTLVKAAALKEKKRVIVEII.

It belongs to the KhpA RNA-binding protein family. Forms a complex with KhpB.

It is found in the cytoplasm. Its function is as follows. A probable RNA chaperone. Forms a complex with KhpB which binds to cellular RNA and controls its expression. Plays a role in peptidoglycan (PG) homeostasis and cell length regulation. The sequence is that of RNA-binding protein KhpA from Caldanaerobacter subterraneus subsp. tengcongensis (strain DSM 15242 / JCM 11007 / NBRC 100824 / MB4) (Thermoanaerobacter tengcongensis).